The sequence spans 434 residues: Serine/threonine transporter SstT (434 aa).

9 helical membrane-spanning segments follow: residues 14–34 (IVIGIIVGAVLGVMVPSWSFI), 41–61 (FVGALKAIAPLLVFLLIMSAI), 72–92 (FGTVIVLYLSATLFSSIAAVA), 135–155 (ALVEGNYLAILFWSLLIGSGL), 172–192 (TVSAVAQNVIQFAPFGIVGLL), 210–230 (LLMLLVATMVFVYLVVYPFMV), 282–302 (ISIPLGGSANSGGAAITVSIM), 316–336 (IFLALLLCFLSAISATGVSGI), and 351–371 (FGISNDIAMQVVGIGFIIGVV). Residues 414 to 434 (KGTAEVVTPEKANEAEESEQV) are disordered.

This sequence belongs to the dicarboxylate/amino acid:cation symporter (DAACS) (TC 2.A.23) family.

The protein localises to the cell membrane. It catalyses the reaction L-serine(in) + Na(+)(in) = L-serine(out) + Na(+)(out). It carries out the reaction L-threonine(in) + Na(+)(in) = L-threonine(out) + Na(+)(out). Its function is as follows. Involved in the import of serine and threonine into the cell, with the concomitant import of sodium (symport system). This chain is Serine/threonine transporter SstT, found in Lacticaseibacillus paracasei (strain ATCC 334 / BCRC 17002 / CCUG 31169 / CIP 107868 / KCTC 3260 / NRRL B-441) (Lactobacillus paracasei).